A 179-amino-acid polypeptide reads, in one-letter code: Putative FBD-associated F-box protein At3g12840 (179 aa).

An F-box domain is found at 14-60 (AARINDLPDDLLATVLSFVPTKDAVATSILSKRWRPIWKRAVNLESD). Residues 101-152 (KWKQPDFVPLSLYRSLEAFEWIGFKGREKTEKKAAFHILRNACNLKTMAITT) enclose the FBD domain.

The polypeptide is Putative FBD-associated F-box protein At3g12840 (Arabidopsis thaliana (Mouse-ear cress)).